Consider the following 458-residue polypeptide: Exodeoxyribonuclease 7 large subunit (458 aa).

Belongs to the XseA family. Heterooligomer composed of large and small subunits.

Its subcellular location is the cytoplasm. The catalysed reaction is Exonucleolytic cleavage in either 5'- to 3'- or 3'- to 5'-direction to yield nucleoside 5'-phosphates.. Functionally, bidirectionally degrades single-stranded DNA into large acid-insoluble oligonucleotides, which are then degraded further into small acid-soluble oligonucleotides. The polypeptide is Exodeoxyribonuclease 7 large subunit (Sodalis glossinidius (strain morsitans)).